A 321-amino-acid polypeptide reads, in one-letter code: Beta-ketoacyl-[acyl-carrier-protein] synthase III (321 aa).

Catalysis depends on residues Cys115 and His248. The segment at 249–253 is ACP-binding; the sequence is QANIR. Asn278 is an active-site residue.

It belongs to the thiolase-like superfamily. FabH family. In terms of assembly, homodimer.

It is found in the cytoplasm. The enzyme catalyses malonyl-[ACP] + acetyl-CoA + H(+) = 3-oxobutanoyl-[ACP] + CO2 + CoA. The protein operates within lipid metabolism; fatty acid biosynthesis. Functionally, catalyzes the condensation reaction of fatty acid synthesis by the addition to an acyl acceptor of two carbons from malonyl-ACP. Catalyzes the first condensation reaction which initiates fatty acid synthesis and may therefore play a role in governing the total rate of fatty acid production. Possesses both acetoacetyl-ACP synthase and acetyl transacylase activities. Its substrate specificity determines the biosynthesis of branched-chain and/or straight-chain of fatty acids. This chain is Beta-ketoacyl-[acyl-carrier-protein] synthase III, found in Aromatoleum aromaticum (strain DSM 19018 / LMG 30748 / EbN1) (Azoarcus sp. (strain EbN1)).